A 406-amino-acid polypeptide reads, in one-letter code: RNA exonuclease 4 (406 aa).

Residues 1–10 (MAPELSSNWK) show a composition bias toward polar residues. Disordered regions lie at residues 1 to 108 (MAPE…TLPS) and 156 to 181 (AGLTLPGHSSSSPKSNKNGLPLPTDL). 3 stretches are compositionally biased toward low complexity: residues 54–64 (SQQQQQASNPS), 72–82 (SQTQSQPSSQK), and 94–108 (SKPTTSSSPNSTLPS). A compositionally biased stretch (polar residues) spans 162–173 (GHSSSSPKSNKN). One can recognise an Exonuclease domain in the interval 216-367 (YLSIDCEMVG…EDARVAMLLF (152 aa)). Over residues 377–387 (ENSNRYEEGQA) the composition is skewed to basic and acidic residues. Positions 377–406 (ENSNRYEEGQAKKGGNGGGGGGGKKKKGKK) are disordered. The segment covering 388–398 (KKGGNGGGGGG) has biased composition (gly residues).

It belongs to the REXO4 family.

The protein localises to the nucleus. Exoribonuclease involved in ribosome biosynthesis. Involved in the processing of ITS1, the internal transcribed spacer localized between the 18S and 5.8S rRNAs. The chain is RNA exonuclease 4 (rex-4) from Neurospora crassa (strain ATCC 24698 / 74-OR23-1A / CBS 708.71 / DSM 1257 / FGSC 987).